The primary structure comprises 200 residues: MAHGPRYRVPFRRRREGKTNYHKRLALLKSGKPRLVVRKTLNHHVAQIVLYAPEGDKTVVSAHTRELMRDFGWKGHGGNTPSAYLLGLLIGYKALEKGIEEAILDIGLHPPTKGSSIFAVLKGAVDAGLNVPHSEEIYPGEERINGKHIAEYAKMLKEDDENYKKQFGGYLVKGLEPEKLPEHFEEVKARIIEKFEKVRA.

The protein belongs to the universal ribosomal protein uL18 family. Part of the 50S ribosomal subunit. Contacts the 5S and 23S rRNAs.

Its function is as follows. This is one of the proteins that bind and probably mediate the attachment of the 5S RNA into the large ribosomal subunit, where it forms part of the central protuberance. The sequence is that of Large ribosomal subunit protein uL18 from Thermococcus sibiricus (strain DSM 12597 / MM 739).